The sequence spans 296 residues: Nucleotide-binding protein SPCG_1551 (296 aa).

13-20 is an ATP binding site; sequence GMSGAGKT. Position 63–66 (63–66) interacts with GTP; that stretch reads DMRS.

It belongs to the RapZ-like family.

Displays ATPase and GTPase activities. In Streptococcus pneumoniae (strain CGSP14), this protein is Nucleotide-binding protein SPCG_1551.